The following is a 1282-amino-acid chain: Cytokine receptor (1282 aa).

The first 23 residues, 1-23 (MVAQEQLVLLLMLLAGCRGGANA), serve as a signal peptide directing secretion. Residues 24–889 (ILDPGWVIPS…CTPDTHSVKA (866 aa)) are Extracellular-facing. 4 N-linked (GlcNAc...) asparagine glycosylation sites follow: Asn-44, Asn-86, Asn-87, and Asn-114. A disulfide bond links Cys-47 and Cys-106. 7 Fibronectin type-III domains span residues 124-220 (PLLV…NHFE), 227-327 (PGQN…TAPA), 329-431 (PRRP…SNRD), 436-535 (EPRN…KKDD), 537-631 (AKME…TGEA), 635-735 (QPRE…TAIG), and 736-836 (VPSP…LMST). Cys-132 and Cys-142 are oxidised to a cystine. N-linked (GlcNAc...) asparagine glycosylation is found at Asn-143 and Asn-156. Residues Cys-173 and Cys-183 are joined by a disulfide bond. Asn-184, Asn-230, Asn-235, Asn-278, Asn-298, Asn-310, Asn-376, Asn-448, and Asn-466 each carry an N-linked (GlcNAc...) asparagine glycan. A disulfide bridge connects residues Cys-472 and Cys-482. 8 N-linked (GlcNAc...) asparagine glycosylation sites follow: Asn-568, Asn-581, Asn-626, Asn-676, Asn-703, Asn-777, Asn-790, and Asn-862. Residues 890–910 (MYQTIEVTVAILVLGVIFYLV) form a helical membrane-spanning segment. The Cytoplasmic portion of the chain corresponds to 911 to 1282 (YKKYRKMSDI…NAMAHNRHVL (372 aa)). Ser-976 carries the phosphoserine modification. 2 disordered regions span residues 989–1092 (TASS…HTFS) and 1238–1258 (TVGS…QHSR). Basic and acidic residues-rich tracts occupy residues 999–1009 (VDRDGYDDNHE) and 1033–1064 (NDRE…DREQ).

Belongs to the type I cytokine receptor family. In terms of assembly, interacts with wdp; the interaction promotes internalization of dome and its subsequent lysosomal degradation; thereby reducing JAK/STAT signaling. Post-translationally, undergoes lysosomal degradation. In terms of tissue distribution, in stage 11 embryos, tracheal pits show highest expression, at stage 14 high expression is detected in the posterior spiracles, gut and head.

Its subcellular location is the apicolateral cell membrane. Critical for epithelial morphogenesis during oogenesis; border cell migration. Required in the germarium for the polarization of follicle cells during encapsulation of germline cells. Required for embryonic segmentation and trachea specification. Essential receptor molecule for upd and JAK/STAT signaling during oogenesis. This chain is Cytokine receptor (dome), found in Drosophila melanogaster (Fruit fly).